Reading from the N-terminus, the 397-residue chain is S-adenosylmethionine synthase (397 aa).

Residue H16 coordinates ATP. D18 serves as a coordination point for Mg(2+). A K(+)-binding site is contributed by E44. E57 and Q100 together coordinate L-methionine. The interval 100-110 (QSPDIAQGVDN) is flexible loop. Residues 175–177 (DGK), 242–243 (RF), D251, 257–258 (RK), A274, and K278 each bind ATP. D251 is a binding site for L-methionine. An L-methionine-binding site is contributed by K282.

It belongs to the AdoMet synthase family. As to quaternary structure, homotetramer; dimer of dimers. Mg(2+) is required as a cofactor. The cofactor is K(+).

It is found in the cytoplasm. It catalyses the reaction L-methionine + ATP + H2O = S-adenosyl-L-methionine + phosphate + diphosphate. It functions in the pathway amino-acid biosynthesis; S-adenosyl-L-methionine biosynthesis; S-adenosyl-L-methionine from L-methionine: step 1/1. In terms of biological role, catalyzes the formation of S-adenosylmethionine (AdoMet) from methionine and ATP. The overall synthetic reaction is composed of two sequential steps, AdoMet formation and the subsequent tripolyphosphate hydrolysis which occurs prior to release of AdoMet from the enzyme. The chain is S-adenosylmethionine synthase from Leifsonia xyli subsp. xyli (strain CTCB07).